We begin with the raw amino-acid sequence, 190 residues long: METLTTFILCGGKSSRMQSEKGLVLFQHKPFIEHIIQAILPITEQIKLITASKEYDYLPYEKIPDLVLDKGPLGGIYTALSHSETEFNLILSCDIPLISTELLQELISKHTEEAGITVFASESKTHPLIGIYSKKILPIIKSAIEADELKMMDLLAKVPHQILNIEESENFHLTNINSADELNDLNINLS.

GTP-binding positions include 9-11, K21, D65, and D94; that span reads LCG. Mg(2+) is bound at residue D94.

The protein belongs to the MobA family. Mg(2+) serves as cofactor.

It is found in the cytoplasm. It carries out the reaction Mo-molybdopterin + GTP + H(+) = Mo-molybdopterin guanine dinucleotide + diphosphate. Functionally, transfers a GMP moiety from GTP to Mo-molybdopterin (Mo-MPT) cofactor (Moco or molybdenum cofactor) to form Mo-molybdopterin guanine dinucleotide (Mo-MGD) cofactor. In Flavobacterium johnsoniae (strain ATCC 17061 / DSM 2064 / JCM 8514 / BCRC 14874 / CCUG 350202 / NBRC 14942 / NCIMB 11054 / UW101) (Cytophaga johnsonae), this protein is Probable molybdenum cofactor guanylyltransferase.